The sequence spans 688 residues: Glycine--tRNA ligase beta subunit (688 aa).

This sequence belongs to the class-II aminoacyl-tRNA synthetase family. In terms of assembly, tetramer of two alpha and two beta subunits.

Its subcellular location is the cytoplasm. It catalyses the reaction tRNA(Gly) + glycine + ATP = glycyl-tRNA(Gly) + AMP + diphosphate. This is Glycine--tRNA ligase beta subunit (glyS) from Haemophilus influenzae (strain ATCC 51907 / DSM 11121 / KW20 / Rd).